The chain runs to 36 residues: Photosystem II reaction center protein Y (36 aa).

The Lumenal portion of the chain corresponds to 1 to 4; that stretch reads MDTR. Residues 5 to 23 traverse the membrane as a helical segment; sequence LIVIAAPVLVAASWALFNI. At 24–36 the chain is on the stromal side; the sequence is GRLAIQQIQRLKR.

The protein belongs to the PsbY family. As to quaternary structure, PSII is composed of 1 copy each of membrane proteins PsbA, PsbB, PsbC, PsbD, PsbE, PsbF, PsbH, PsbI, PsbJ, PsbK, PsbL, PsbM, PsbT, PsbX, PsbY, PsbZ, Psb30/Ycf12, at least 3 peripheral proteins of the oxygen-evolving complex and a large number of cofactors. It forms dimeric complexes.

It localises to the plastid. The protein localises to the chloroplast thylakoid membrane. Its function is as follows. Loosely associated component of the core of photosystem II (PSII), it is not always seen in crystals. PSII is a light-driven water plastoquinone oxidoreductase, using light energy to abstract electrons from H(2)O, generating a proton gradient subsequently used for ATP formation. The polypeptide is Photosystem II reaction center protein Y (Phaeodactylum tricornutum (strain CCAP 1055/1)).